Here is a 155-residue protein sequence, read N- to C-terminus: Pathogenesis-related protein 2 (155 aa).

The protein belongs to the BetVI family.

This Phaseolus vulgaris (Kidney bean) protein is Pathogenesis-related protein 2.